The primary structure comprises 538 residues: Metal transporter Nramp5 (538 aa).

The next 12 helical transmembrane spans lie at 44 to 64, 77 to 97, 118 to 138, 140 to 160, 181 to 201, 227 to 247, 264 to 284, 324 to 346, 365 to 385, 391 to 411, 427 to 447, and 467 to 487; these read FLAHVGPGFMVSLAYLDPGNL, ELLWVILIGLIFALIIQSLAA, FVKIFLWLLAELAVIAADIPE, IGTAFAFNILFHIPVWVGVLI, FLISMLVFVMAACFFGELSIV, IALLGALVMPHNLFLHSALVL, FFLYESGFALFVALLINIAVV, SAIVYGVALLASGQSSTITGTYA, NLMTRTIAIAPSLIVSIIGGS, LIIIASMILSFELPFALIPLL, IYIIVFSWFLGLLIIGINMYF, and VLVGAAVFPFMLVYIVAVVYL. Residues 518 to 538 are disordered; sequence AVDDDEPLPYRDDLADIPLPR.

This sequence belongs to the NRAMP (TC 2.A.55) family.

It localises to the membrane. Probable metal transporter. The polypeptide is Metal transporter Nramp5 (NRAMP5) (Oryza sativa subsp. japonica (Rice)).